The sequence spans 224 residues: Cytidylate kinase (224 aa).

11 to 19 (GPAAAGKST) provides a ligand contact to ATP.

Belongs to the cytidylate kinase family. Type 1 subfamily.

The protein localises to the cytoplasm. It carries out the reaction CMP + ATP = CDP + ADP. The enzyme catalyses dCMP + ATP = dCDP + ADP. The chain is Cytidylate kinase from Geobacillus kaustophilus (strain HTA426).